A 588-amino-acid polypeptide reads, in one-letter code: Ufm1-specific protease (588 aa).

Active-site residues include Cys-420, Asp-544, and His-546.

Belongs to the peptidase C78 family. In terms of assembly, interacts with odr-4.

The protein localises to the endoplasmic reticulum membrane. It is found in the cytoplasm. Its subcellular location is the perinuclear region. Its function is as follows. Thiol protease which recognizes and hydrolyzes the peptide bond at the C-terminal Gly of ufm-1, a ubiquitin-like modifier protein bound to a number of target proteins. Required, with oct-4, for the localization of a subset of 7 transmembrane domain odorant receptors, including odr-10, to the cilia of olfactory neurons AWA and AWC. Operates in aggregation behavior, and responses to oxygen levels. This is Ufm1-specific protease from Caenorhabditis briggsae.